Here is a 257-residue protein sequence, read N- to C-terminus: 5'-nucleotidase SurE (257 aa).

Positions 8, 9, 40, and 92 each coordinate a divalent metal cation.

Belongs to the SurE nucleotidase family. A divalent metal cation serves as cofactor.

It is found in the cytoplasm. It carries out the reaction a ribonucleoside 5'-phosphate + H2O = a ribonucleoside + phosphate. Its function is as follows. Nucleotidase that shows phosphatase activity on nucleoside 5'-monophosphates. The polypeptide is 5'-nucleotidase SurE (Rhizobium etli (strain ATCC 51251 / DSM 11541 / JCM 21823 / NBRC 15573 / CFN 42)).